Here is a 77-residue protein sequence, read N- to C-terminus: U8-lycotoxin-Ls1r (77 aa).

A signal peptide spans 1–20 (MKLIIFTGLVLFAIVSLIEA). Positions 21–26 (QAENEK) are excised as a propeptide.

This sequence belongs to the neurotoxin 19 (CSTX) family. 08 (U8-Lctx) subfamily. Post-translationally, contains 4 disulfide bonds. In terms of tissue distribution, expressed by the venom gland.

Its subcellular location is the secreted. In Lycosa singoriensis (Wolf spider), this protein is U8-lycotoxin-Ls1r.